Reading from the N-terminus, the 852-residue chain is 2-deoxy-glucose resistant protein 2 (852 aa).

Positions 1–18 (MFKSKTSTLSYDETPNSN) are enriched in polar residues. The disordered stretch occupies residues 1–60 (MFKSKTSTLSYDETPNSNEGDRNATPVNPKEKSQTKHLNIPGDRSRHSSIADSKRSSSRY). 6 WD repeats span residues 171–210 (LFKN…VKRS), 278–316 (EHAL…SLKT), 318–358 (VHPD…VSYA), 426–471 (QHGP…ELFK), 476–515 (GSSR…LSAE), and 651–689 (GFSS…EIRK). Phosphoserine is present on serine 716. Residues 723–748 (DERSSTEDNEFSTTPPSNTHNSRPSH) are disordered. Residues 733–744 (FSTTPPSNTHNS) show a composition bias toward polar residues.

The protein belongs to the WD repeat DGR2 family.

This chain is 2-deoxy-glucose resistant protein 2 (DGR2), found in Saccharomyces cerevisiae (strain ATCC 204508 / S288c) (Baker's yeast).